The following is a 148-amino-acid chain: MKKVTGQIKLQLPAGKANPAPPVGPALGQHGVNIMEFCKQFNAATQAQAKEALIIPVIITVYQDRSFTFVLKTPPAAILLKKAAGLHTEKKKGSGAHKPGKEKVGQVTRKQVEQIAKTKMQDMTAGTLEAAMRTVEGTALSMGIEIVG.

The tract at residues 89-108 (EKKKGSGAHKPGKEKVGQVT) is disordered.

The protein belongs to the universal ribosomal protein uL11 family. As to quaternary structure, part of the ribosomal stalk of the 50S ribosomal subunit. Interacts with L10 and the large rRNA to form the base of the stalk. L10 forms an elongated spine to which L12 dimers bind in a sequential fashion forming a multimeric L10(L12)X complex. One or more lysine residues are methylated.

Its function is as follows. Forms part of the ribosomal stalk which helps the ribosome interact with GTP-bound translation factors. This is Large ribosomal subunit protein uL11 from Anaeromyxobacter dehalogenans (strain 2CP-1 / ATCC BAA-258).